The following is a 454-amino-acid chain: Bifunctional protein GlmU (454 aa).

The tract at residues 1–228 (MTLPLHVVIL…PQHVEGANDP (228 aa)) is pyrophosphorylase. Residues 10–13 (LAAG), Lys-24, Gln-76, 81–82 (GT), 103–105 (YGD), Gly-138, Glu-153, Asn-168, and Asn-226 each bind UDP-N-acetyl-alpha-D-glucosamine. Residue Asp-105 coordinates Mg(2+). Residue Asn-226 coordinates Mg(2+). Residues 229–249 (WQLAQLERAWQLRAARTLCLQ) are linker. The segment at 250-454 (GVRMADPARV…IEGWKRPTKK (205 aa)) is N-acetyltransferase. UDP-N-acetyl-alpha-D-glucosamine is bound by residues Arg-332 and Lys-350. The active-site Proton acceptor is His-362. UDP-N-acetyl-alpha-D-glucosamine is bound by residues Tyr-365 and Asn-376. Acetyl-CoA-binding positions include Ala-379, 385–386 (NY), Ser-404, Ala-422, and Arg-439.

In the N-terminal section; belongs to the N-acetylglucosamine-1-phosphate uridyltransferase family. It in the C-terminal section; belongs to the transferase hexapeptide repeat family. As to quaternary structure, homotrimer. Mg(2+) is required as a cofactor.

It localises to the cytoplasm. It carries out the reaction alpha-D-glucosamine 1-phosphate + acetyl-CoA = N-acetyl-alpha-D-glucosamine 1-phosphate + CoA + H(+). The enzyme catalyses N-acetyl-alpha-D-glucosamine 1-phosphate + UTP + H(+) = UDP-N-acetyl-alpha-D-glucosamine + diphosphate. It participates in nucleotide-sugar biosynthesis; UDP-N-acetyl-alpha-D-glucosamine biosynthesis; N-acetyl-alpha-D-glucosamine 1-phosphate from alpha-D-glucosamine 6-phosphate (route II): step 2/2. The protein operates within nucleotide-sugar biosynthesis; UDP-N-acetyl-alpha-D-glucosamine biosynthesis; UDP-N-acetyl-alpha-D-glucosamine from N-acetyl-alpha-D-glucosamine 1-phosphate: step 1/1. It functions in the pathway bacterial outer membrane biogenesis; LPS lipid A biosynthesis. Catalyzes the last two sequential reactions in the de novo biosynthetic pathway for UDP-N-acetylglucosamine (UDP-GlcNAc). The C-terminal domain catalyzes the transfer of acetyl group from acetyl coenzyme A to glucosamine-1-phosphate (GlcN-1-P) to produce N-acetylglucosamine-1-phosphate (GlcNAc-1-P), which is converted into UDP-GlcNAc by the transfer of uridine 5-monophosphate (from uridine 5-triphosphate), a reaction catalyzed by the N-terminal domain. This chain is Bifunctional protein GlmU, found in Xanthomonas euvesicatoria pv. vesicatoria (strain 85-10) (Xanthomonas campestris pv. vesicatoria).